Consider the following 206-residue polypeptide: Transmembrane emp24 domain-containing protein bai (206 aa).

A signal peptide spans 1 to 20; that stretch reads MARTLLILCTLMAWAWTGEA. Residues 21–172 lie on the Lumenal side of the membrane; that stretch reads VMFKLTPNTQ…RDTNEKTNSR (152 aa). Positions 30 to 140 constitute a GOLD domain; it reads QKCLKEDIQA…LKPLEVDLKR (111 aa). A helical transmembrane segment spans residues 173–193; sequence VLFFSIFSMCCLLGLATWQVL. Over 194–206 the chain is Cytoplasmic; that stretch reads YLRRYFKAKKLIE.

It belongs to the EMP24/GP25L family.

It localises to the membrane. Eca and bai are essential, though not redundant, for dorsoventral patterning of the embryo. Specifically required during early embryogenesis for the activity of maternal tkv, while the zygotic tkv is not affected. The chain is Transmembrane emp24 domain-containing protein bai from Drosophila ananassae (Fruit fly).